The following is a 289-amino-acid chain: 4-hydroxy-3-methylbut-2-enyl diphosphate reductase (289 aa).

A [4Fe-4S] cluster-binding site is contributed by Cys12. The (2E)-4-hydroxy-3-methylbut-2-enyl diphosphate site is built by His44 and His81. Residues His44 and His81 each coordinate dimethylallyl diphosphate. Isopentenyl diphosphate is bound by residues His44 and His81. Cys103 serves as a coordination point for [4Fe-4S] cluster. His130 serves as a coordination point for (2E)-4-hydroxy-3-methylbut-2-enyl diphosphate. His130 is a dimethylallyl diphosphate binding site. His130 is a binding site for isopentenyl diphosphate. The active-site Proton donor is Glu132. (2E)-4-hydroxy-3-methylbut-2-enyl diphosphate is bound at residue Thr174. [4Fe-4S] cluster is bound at residue Cys202. 3 residues coordinate (2E)-4-hydroxy-3-methylbut-2-enyl diphosphate: Ser230, Asn232, and Ser273. The dimethylallyl diphosphate site is built by Ser230, Asn232, and Ser273. The isopentenyl diphosphate site is built by Ser230, Asn232, and Ser273.

Belongs to the IspH family. Requires [4Fe-4S] cluster as cofactor.

It carries out the reaction isopentenyl diphosphate + 2 oxidized [2Fe-2S]-[ferredoxin] + H2O = (2E)-4-hydroxy-3-methylbut-2-enyl diphosphate + 2 reduced [2Fe-2S]-[ferredoxin] + 2 H(+). It catalyses the reaction dimethylallyl diphosphate + 2 oxidized [2Fe-2S]-[ferredoxin] + H2O = (2E)-4-hydroxy-3-methylbut-2-enyl diphosphate + 2 reduced [2Fe-2S]-[ferredoxin] + 2 H(+). It functions in the pathway isoprenoid biosynthesis; dimethylallyl diphosphate biosynthesis; dimethylallyl diphosphate from (2E)-4-hydroxy-3-methylbutenyl diphosphate: step 1/1. It participates in isoprenoid biosynthesis; isopentenyl diphosphate biosynthesis via DXP pathway; isopentenyl diphosphate from 1-deoxy-D-xylulose 5-phosphate: step 6/6. Its function is as follows. Catalyzes the conversion of 1-hydroxy-2-methyl-2-(E)-butenyl 4-diphosphate (HMBPP) into a mixture of isopentenyl diphosphate (IPP) and dimethylallyl diphosphate (DMAPP). Acts in the terminal step of the DOXP/MEP pathway for isoprenoid precursor biosynthesis. This chain is 4-hydroxy-3-methylbut-2-enyl diphosphate reductase, found in Treponema denticola (strain ATCC 35405 / DSM 14222 / CIP 103919 / JCM 8153 / KCTC 15104).